The chain runs to 205 residues: MDSIAKRPRTRLSPLKRKQQLMEIALEVFARRGIGRGGHADIAEIAQVSVATVFNYFPTREDLVDEVLNHVVRQFSNFLSDNIDLDIHARENIANITNAMIELVSQDCHWLKVWFEWSASTRDEVWPLFVTTNRTNQLLVQNMFIKAIERGEVCDQHEPEHLANLFHGICYSIFVQANRSKSEAELTNLVSAYLDMLCIYNREHH.

The region spanning 15-75 is the HTH tetR-type domain; the sequence is LKRKQQLMEI…EVLNHVVRQF (61 aa). A DNA-binding region (H-T-H motif) is located at residues 39-58; the sequence is HADIAEIAQVSVATVFNYFP.

Regulatory protein of bacterial bioluminescence. It probably binds the autoinducer molecule and potentiates the transcription of the bioluminescence operon. This chain is HTH-type transcriptional regulator LuxR (luxR), found in Vibrio harveyi (Beneckea harveyi).